We begin with the raw amino-acid sequence, 37 residues long: MKVRASVKAICKDCKIVKRSGVVRVICANPKHKQRQG.

The protein belongs to the bacterial ribosomal protein bL36 family.

This chain is Large ribosomal subunit protein bL36, found in Ureaplasma urealyticum serovar 10 (strain ATCC 33699 / Western).